Reading from the N-terminus, the 214-residue chain is tRNA (guanine-N(7)-)-methyltransferase (214 aa).

Positions 43, 68, 95, and 117 each coordinate S-adenosyl-L-methionine. The active site involves D117. Substrate contacts are provided by residues K121, D153, and 190–193 (TEYE).

It belongs to the class I-like SAM-binding methyltransferase superfamily. TrmB family.

It carries out the reaction guanosine(46) in tRNA + S-adenosyl-L-methionine = N(7)-methylguanosine(46) in tRNA + S-adenosyl-L-homocysteine. The protein operates within tRNA modification; N(7)-methylguanine-tRNA biosynthesis. In terms of biological role, catalyzes the formation of N(7)-methylguanine at position 46 (m7G46) in tRNA. The sequence is that of tRNA (guanine-N(7)-)-methyltransferase from Staphylococcus aureus (strain JH1).